Here is a 155-residue protein sequence, read N- to C-terminus: 6,7-dimethyl-8-ribityllumazine synthase (155 aa).

5-amino-6-(D-ribitylamino)uracil contacts are provided by residues F24, 58 to 60 (AFE), and 82 to 84 (VII). 87 to 88 (ST) contributes to the (2S)-2-hydroxy-3-oxobutyl phosphate binding site. The active-site Proton donor is H90. A 5-amino-6-(D-ribitylamino)uracil-binding site is contributed by F115. Residue R129 participates in (2S)-2-hydroxy-3-oxobutyl phosphate binding.

This sequence belongs to the DMRL synthase family.

It catalyses the reaction (2S)-2-hydroxy-3-oxobutyl phosphate + 5-amino-6-(D-ribitylamino)uracil = 6,7-dimethyl-8-(1-D-ribityl)lumazine + phosphate + 2 H2O + H(+). It participates in cofactor biosynthesis; riboflavin biosynthesis; riboflavin from 2-hydroxy-3-oxobutyl phosphate and 5-amino-6-(D-ribitylamino)uracil: step 1/2. Functionally, catalyzes the formation of 6,7-dimethyl-8-ribityllumazine by condensation of 5-amino-6-(D-ribitylamino)uracil with 3,4-dihydroxy-2-butanone 4-phosphate. This is the penultimate step in the biosynthesis of riboflavin. The polypeptide is 6,7-dimethyl-8-ribityllumazine synthase (Chlorobium phaeobacteroides (strain DSM 266 / SMG 266 / 2430)).